The chain runs to 54 residues: MQLSHLLLAFAMIFVMTIIHTPQVQADAMADADADAAINCRRYPRHPKCRGVSA.

Positions 1–26 (MQLSHLLLAFAMIFVMTIIHTPQVQA) are cleaved as a signal peptide. A propeptide spanning residues 27 to 36 (DAMADADADA) is cleaved from the precursor. Cysteines 40 and 49 form a disulfide.

In terms of tissue distribution, expressed by the venom gland.

Its subcellular location is the secreted. Venom protein with unknown function. Does not induce paralysis when a high dose is administered by intrathoracic injection into the blowfly Lucilia caesar. In Tetramorium bicarinatum (Tramp ant), this protein is U7-myrmicitoxin-Tb1a.